The following is a 421-amino-acid chain: Putative hydro-lyase KRH_21160 (421 aa).

2 disordered regions span residues 200-298 (TWGH…SPVT) and 312-421 (TRAG…AVSR). A compositionally biased stretch (basic residues) spans 224-237 (GSRRRPRWWSRLRR). Composition is skewed to low complexity over residues 243 to 260 (PRATCSSPTPGTPTTRCP) and 370 to 380 (SRGPGPCPRAA).

The protein belongs to the D-glutamate cyclase family.

This Kocuria rhizophila (strain ATCC 9341 / DSM 348 / NBRC 103217 / DC2201) protein is Putative hydro-lyase KRH_21160.